The chain runs to 200 residues: Fibrillarin-like rRNA/tRNA 2'-O-methyltransferase (200 aa).

Residues 62-63 (TT), 78-79 (EF), 103-104 (DA), and 123-126 (DVAQ) contribute to the S-adenosyl-L-methionine site.

This sequence belongs to the methyltransferase superfamily. Fibrillarin family. As to quaternary structure, interacts with nop5. Component of box C/D small ribonucleoprotein (sRNP) particles that contain rpl7ae, FlpA and nop5, plus a guide RNA.

Functionally, involved in pre-rRNA and tRNA processing. Utilizes the methyl donor S-adenosyl-L-methionine to catalyze the site-specific 2'-hydroxyl methylation of ribose moieties in rRNA and tRNA. Site specificity is provided by a guide RNA that base pairs with the substrate. Methylation occurs at a characteristic distance from the sequence involved in base pairing with the guide RNA. The polypeptide is Fibrillarin-like rRNA/tRNA 2'-O-methyltransferase (Methanoculleus marisnigri (strain ATCC 35101 / DSM 1498 / JR1)).